A 264-amino-acid polypeptide reads, in one-letter code: Apolipoprotein A-I (264 aa).

The N-terminal stretch at 1 to 18 is a signal peptide; sequence MKAVVLAVAVLFLTGSQA. 2 consecutive repeat copies span residues 67-88 and 89-110. The 10 X approximate tandem repeats stretch occupies residues 67-264; sequence LNLLENWDTF…DEATQKLNTQ (198 aa). The residue at position 109 (Met-109) is a Methionine sulfoxide. One copy of the 3; half-length repeat lies at 111-121; the sequence is KDLEEVKQKVQ. A run of 3 repeats spans residues 122–143, 144–165, and 166–187. One copy of the 7; truncated repeat lies at 188–207; sequence PYSDQMRDRLAERLTALRDN. Methionine sulfoxide is present on Met-193. Repeat 8 spans residues 208-229; that stretch reads PKLAEYHARATEHLKKLGEKTK. The stretch at 230 to 240 is one 9; half-length repeat; that stretch reads PTLEDLRQGLM. Methionine sulfoxide is present on Met-240. Repeat 10 spans residues 241-264; it reads PWLESLKAKALSVLDEATQKLNTQ.

This sequence belongs to the apolipoprotein A1/A4/E family. In terms of assembly, homodimer. Interacts with APOA1BP and CLU. Component of a sperm activating protein complex (SPAP), consisting of APOA1, an immunoglobulin heavy chain, an immunoglobulin light chain and albumin. Interacts with NDRG1. Interacts with SCGB3A2. Interacts with NAXE and YJEFN3. Glycosylated. In terms of processing, palmitoylated. Post-translationally, phosphorylation sites are present in the extracellular medium.

It is found in the secreted. Its function is as follows. Participates in the reverse transport of cholesterol from tissues to the liver for excretion by promoting cholesterol efflux from tissues and by acting as a cofactor for the lecithin cholesterol acyltransferase (LCAT). As part of the SPAP complex, activates spermatozoa motility. The polypeptide is Apolipoprotein A-I (Apoa1) (Nannospalax galili (Northern Israeli blind subterranean mole rat)).